The chain runs to 173 residues: Membrane protein PM19L (173 aa).

The next 4 membrane-spanning stretches (helical) occupy residues 9 to 29, 43 to 63, 83 to 103, and 124 to 144; these read IAPL…FASW, GVAG…AGVV, LAAG…AFGL, and FVII…GGLF.

Expressed in roots, leaf blades, leaf sheaths, stems, spikelets and embryos.

The protein resides in the membrane. In terms of biological role, may be involved in abiotic stress response through abscisic acid-dependent signaling. This chain is Membrane protein PM19L, found in Oryza sativa subsp. japonica (Rice).